The sequence spans 262 residues: ATP synthase subunit a (262 aa).

6 consecutive transmembrane segments (helical) span residues 32–52 (IAFT…AVFV), 98–118 (LFMF…VLGI), 127–147 (FTIT…VGFW), 153–173 (FFSL…IFPI), 189–209 (LFVA…FVID), and 219–239 (LLVG…EILV).

It belongs to the ATPase A chain family. F-type ATPases have 2 components, CF(1) - the catalytic core - and CF(0) - the membrane proton channel. CF(1) has five subunits: alpha(3), beta(3), gamma(1), delta(1), epsilon(1). CF(0) has four main subunits: a, b, b' and c.

The protein resides in the cell inner membrane. Its function is as follows. Key component of the proton channel; it plays a direct role in the translocation of protons across the membrane. The sequence is that of ATP synthase subunit a from Erythrobacter litoralis (strain HTCC2594).